Here is a 69-residue protein sequence, read N- to C-terminus: DNA-directed RNA polymerase subunit epsilon (69 aa).

The protein belongs to the RNA polymerase subunit epsilon family. RNAP is composed of a core of 2 alpha, a beta and a beta' subunit. The core is associated with a delta subunit, and at least one of epsilon or omega. When a sigma factor is associated with the core the holoenzyme is formed, which can initiate transcription.

It carries out the reaction RNA(n) + a ribonucleoside 5'-triphosphate = RNA(n+1) + diphosphate. Functionally, a non-essential component of RNA polymerase (RNAP). The protein is DNA-directed RNA polymerase subunit epsilon of Bacillus velezensis (strain DSM 23117 / BGSC 10A6 / LMG 26770 / FZB42) (Bacillus amyloliquefaciens subsp. plantarum).